The sequence spans 150 residues: Molybdopterin synthase catalytic subunit (150 aa).

Substrate is bound by residues 37–39 (KVR), 103–104 (HR), Lys119, and 126–128 (KRE). Lys119 is covalently cross-linked (Glycyl lysine isopeptide (Lys-Gly) (interchain with G-Cter in MoaD)).

Belongs to the MoaE family. As to quaternary structure, heterotetramer of 2 MoaD subunits and 2 MoaE subunits. Also stable as homodimer. The enzyme changes between these two forms during catalysis.

The enzyme catalyses 2 [molybdopterin-synthase sulfur-carrier protein]-C-terminal-Gly-aminoethanethioate + cyclic pyranopterin phosphate + H2O = molybdopterin + 2 [molybdopterin-synthase sulfur-carrier protein]-C-terminal Gly-Gly + 2 H(+). Its pathway is cofactor biosynthesis; molybdopterin biosynthesis. Its function is as follows. Converts molybdopterin precursor Z to molybdopterin. This requires the incorporation of two sulfur atoms into precursor Z to generate a dithiolene group. The sulfur is provided by MoaD. The protein is Molybdopterin synthase catalytic subunit (moaE) of Escherichia coli (strain K12).